Reading from the N-terminus, the 190-residue chain is Heme-binding protein 1 (190 aa).

The protein belongs to the HEBP family. Monomer.

It localises to the cytoplasm. In terms of biological role, may bind free porphyrinogens that may be present in the cell and thus facilitate removal of these potentially toxic compound. Binds with a high affinity to one molecule of heme or porphyrins. It binds metalloporphyrins, free porphyrins and N-methylprotoporphyrin with similar affinities. The chain is Heme-binding protein 1 (hebp1) from Xenopus tropicalis (Western clawed frog).